Here is a 150-residue protein sequence, read N- to C-terminus: Lipoprotein signal peptidase (150 aa).

The next 2 helical transmembrane spans lie at 58–78 (FFIIVSIILILFLCYMIFKST) and 85–107 (SFSLIVGGAIGNLFDRIVKGYVV). Active-site residues include Asp108 and Asp122. Residues 117-137 (VFNLADFFITGGVLLLTFLIL) traverse the membrane as a helical segment.

It belongs to the peptidase A8 family.

It localises to the cell membrane. The catalysed reaction is Release of signal peptides from bacterial membrane prolipoproteins. Hydrolyzes -Xaa-Yaa-Zaa-|-(S,diacylglyceryl)Cys-, in which Xaa is hydrophobic (preferably Leu), and Yaa (Ala or Ser) and Zaa (Gly or Ala) have small, neutral side chains.. It functions in the pathway protein modification; lipoprotein biosynthesis (signal peptide cleavage). This protein specifically catalyzes the removal of signal peptides from prolipoproteins. The polypeptide is Lipoprotein signal peptidase (Caldicellulosiruptor bescii (strain ATCC BAA-1888 / DSM 6725 / KCTC 15123 / Z-1320) (Anaerocellum thermophilum)).